The following is a 339-amino-acid chain: Heat-inducible transcription repressor HrcA (339 aa).

The protein belongs to the HrcA family.

Functionally, negative regulator of class I heat shock genes (grpE-dnaK-dnaJ and groELS operons). Prevents heat-shock induction of these operons. This is Heat-inducible transcription repressor HrcA from Nitrosospira multiformis (strain ATCC 25196 / NCIMB 11849 / C 71).